A 60-amino-acid polypeptide reads, in one-letter code: Large ribosomal subunit protein uL30 (60 aa).

Belongs to the universal ribosomal protein uL30 family. Part of the 50S ribosomal subunit.

This chain is Large ribosomal subunit protein uL30, found in Shewanella baltica (strain OS223).